The sequence spans 342 residues: scyllo-inositol 2-dehydrogenase (NAD(+)) (342 aa).

This sequence belongs to the Gfo/Idh/MocA family.

The enzyme catalyses scyllo-inositol + NAD(+) = scyllo-inosose + NADH + H(+). The protein operates within polyol metabolism. Catalyzes the reversible NAD(+)-dependent oxidation of scyllo-inositol (SI) to 2,4,6/3,5-pentahydroxycyclohexanone (scyllo-inosose or SIS). Is required for SI catabolism that allows B.subtilis to utilize SI as the sole carbon source for growth. Cannot use NADP(+) instead of NAD(+). This Bacillus subtilis (strain 168) protein is scyllo-inositol 2-dehydrogenase (NAD(+)).